The chain runs to 429 residues: Glutamate-1-semialdehyde 2,1-aminomutase (429 aa).

Position 268 is an N6-(pyridoxal phosphate)lysine (K268).

The protein belongs to the class-III pyridoxal-phosphate-dependent aminotransferase family. HemL subfamily. In terms of assembly, homodimer. Pyridoxal 5'-phosphate is required as a cofactor.

It is found in the cytoplasm. The enzyme catalyses (S)-4-amino-5-oxopentanoate = 5-aminolevulinate. It functions in the pathway porphyrin-containing compound metabolism; protoporphyrin-IX biosynthesis; 5-aminolevulinate from L-glutamyl-tRNA(Glu): step 2/2. The protein is Glutamate-1-semialdehyde 2,1-aminomutase of Serratia proteamaculans (strain 568).